The sequence spans 256 residues: Type III pantothenate kinase (256 aa).

6-13 contributes to the ATP binding site; sequence DAGNSRIK. Substrate-binding positions include tyrosine 90 and 97–100; that span reads GSDR. The Proton acceptor role is filled by aspartate 99. Residue threonine 123 participates in ATP binding. Threonine 187 lines the substrate pocket.

Belongs to the type III pantothenate kinase family. Homodimer. It depends on NH4(+) as a cofactor. K(+) is required as a cofactor.

The protein localises to the cytoplasm. It carries out the reaction (R)-pantothenate + ATP = (R)-4'-phosphopantothenate + ADP + H(+). It functions in the pathway cofactor biosynthesis; coenzyme A biosynthesis; CoA from (R)-pantothenate: step 1/5. Functionally, catalyzes the phosphorylation of pantothenate (Pan), the first step in CoA biosynthesis. In Burkholderia mallei (strain NCTC 10247), this protein is Type III pantothenate kinase.